The chain runs to 576 residues: Proline--tRNA ligase (576 aa).

Belongs to the class-II aminoacyl-tRNA synthetase family. ProS type 1 subfamily. Homodimer.

Its subcellular location is the cytoplasm. The enzyme catalyses tRNA(Pro) + L-proline + ATP = L-prolyl-tRNA(Pro) + AMP + diphosphate. Functionally, catalyzes the attachment of proline to tRNA(Pro) in a two-step reaction: proline is first activated by ATP to form Pro-AMP and then transferred to the acceptor end of tRNA(Pro). As ProRS can inadvertently accommodate and process non-cognate amino acids such as alanine and cysteine, to avoid such errors it has two additional distinct editing activities against alanine. One activity is designated as 'pretransfer' editing and involves the tRNA(Pro)-independent hydrolysis of activated Ala-AMP. The other activity is designated 'posttransfer' editing and involves deacylation of mischarged Ala-tRNA(Pro). The misacylated Cys-tRNA(Pro) is not edited by ProRS. This is Proline--tRNA ligase from Psychrobacter sp. (strain PRwf-1).